A 304-amino-acid chain; its full sequence is Oxygen-dependent coproporphyrinogen-III oxidase (304 aa).

Ser-93 contacts substrate. Residues His-97 and His-107 each contribute to the a divalent metal cation site. The active-site Proton donor is His-107. 109-111 (NVR) is a binding site for substrate. Residues His-146 and His-176 each coordinate a divalent metal cation. The tract at residues 241–276 (YVEFNLVYDRGTLFGLQSGGRTESILMSLPPQVRWG) is important for dimerization. Residue 259-261 (GGR) participates in substrate binding.

This sequence belongs to the aerobic coproporphyrinogen-III oxidase family. In terms of assembly, homodimer. Requires a divalent metal cation as cofactor.

It is found in the cytoplasm. It carries out the reaction coproporphyrinogen III + O2 + 2 H(+) = protoporphyrinogen IX + 2 CO2 + 2 H2O. It participates in porphyrin-containing compound metabolism; protoporphyrin-IX biosynthesis; protoporphyrinogen-IX from coproporphyrinogen-III (O2 route): step 1/1. Involved in the heme biosynthesis. Catalyzes the aerobic oxidative decarboxylation of propionate groups of rings A and B of coproporphyrinogen-III to yield the vinyl groups in protoporphyrinogen-IX. The protein is Oxygen-dependent coproporphyrinogen-III oxidase of Pseudomonas syringae pv. syringae (strain B728a).